The chain runs to 569 residues: Endonuclease/exonuclease/phosphatase family domain-containing protein 1 (569 aa).

The interval 1-20 (MGSTLGCHRSIPRDPSDLSH) is disordered. Glycine 2 is lipidated: N-myristoyl glycine. The segment covering 11-20 (IPRDPSDLSH) has biased composition (basic and acidic residues). Phosphoserine is present on residues serine 16, serine 21, and serine 25. The region spanning 38–67 (ERLNINTATEEELMTLPGVTRAVARSIVEY) is the HhH domain. Serine 106, serine 110, serine 160, and serine 173 each carry phosphoserine. A disordered region spans residues 200–225 (SRPPSTHTNGGLTFTAKPHPSPTSLS). Residues 202–211 (PPSTHTNGGL) show a composition bias toward polar residues. Threonine 265 bears the Phosphothreonine mark. At serine 428 the chain carries Phosphoserine. Residues 545–569 (SKKDAPRNGSGVALERSEANIKHER) form a disordered region. Positions 559–569 (ERSEANIKHER) are enriched in basic and acidic residues.

The protein is Endonuclease/exonuclease/phosphatase family domain-containing protein 1 (EEPD1) of Homo sapiens (Human).